Consider the following 229-residue polypeptide: UPF0758 protein Cbei_0490 (229 aa).

The MPN domain maps to 107-229 (KITSPKDLAS…FVSLKERGLI (123 aa)). H178, H180, and D191 together coordinate Zn(2+). The short motif at 178–191 (HNHPSGDPTPSRED) is the JAMM motif element.

It belongs to the UPF0758 family.

In Clostridium beijerinckii (strain ATCC 51743 / NCIMB 8052) (Clostridium acetobutylicum), this protein is UPF0758 protein Cbei_0490.